A 354-amino-acid chain; its full sequence is Pyrimidine monooxygenase RutA (354 aa).

FMN is bound by residues 49–50 (IK), Asn115, Glu124, 140–141 (RY), and Ser189.

This sequence belongs to the NtaA/SnaA/DszA monooxygenase family. RutA subfamily.

The catalysed reaction is uracil + FMNH2 + NADH + O2 = (Z)-3-ureidoacrylate + FMN + NAD(+) + H2O + H(+). It catalyses the reaction thymine + FMNH2 + NADH + O2 = (Z)-2-methylureidoacrylate + FMN + NAD(+) + H2O + H(+). Its function is as follows. Catalyzes the pyrimidine ring opening between N-3 and C-4 by an unusual flavin hydroperoxide-catalyzed mechanism, adding oxygen atoms in the process to yield ureidoacrylate peracid, that immediately reacts with FMN forming ureidoacrylate and FMN-N(5)-oxide. The FMN-N(5)-oxide reacts spontaneously with NADH to produce FMN. Requires the flavin reductase RutF to regenerate FMN in vivo. This is Pyrimidine monooxygenase RutA from Caulobacter sp. (strain K31).